A 311-amino-acid chain; its full sequence is Pyrimidine-specific ribonucleoside hydrolase RihA (311 aa).

His-240 is an active-site residue.

Belongs to the IUNH family. RihA subfamily.

Its function is as follows. Hydrolyzes with equal efficiency cytidine or uridine to ribose and cytosine or uracil, respectively. The sequence is that of Pyrimidine-specific ribonucleoside hydrolase RihA from Escherichia coli O7:K1 (strain IAI39 / ExPEC).